Reading from the N-terminus, the 161-residue chain is Endoribonuclease YbeY (161 aa).

Zn(2+)-binding residues include His-121, His-125, and His-131.

This sequence belongs to the endoribonuclease YbeY family. Zn(2+) serves as cofactor.

The protein resides in the cytoplasm. Its function is as follows. Single strand-specific metallo-endoribonuclease involved in late-stage 70S ribosome quality control and in maturation of the 3' terminus of the 16S rRNA. The protein is Endoribonuclease YbeY of Xanthomonas axonopodis pv. citri (strain 306).